A 491-amino-acid polypeptide reads, in one-letter code: Pyruvate carboxylase subunit A (491 aa).

One can recognise a Biotin carboxylation domain in the interval 1 to 445; the sequence is MFSKILVANR…HTHFVDEYRR (445 aa). The ATP site is built by lysine 116, glutamate 200, and histidine 235. The ATP-grasp domain occupies 120–316; the sequence is KKLMKKAGVP…LVKEQIRVAS (197 aa). Arginine 291 is an active-site residue.

As to quaternary structure, heterooctamer of four A and four B subunits. Requires Mg(2+) as cofactor. Mn(2+) serves as cofactor. It depends on Co(2+) as a cofactor.

It carries out the reaction hydrogencarbonate + pyruvate + ATP = oxaloacetate + ADP + phosphate + H(+). The protein operates within carbohydrate biosynthesis; gluconeogenesis. Its activity is regulated as follows. Inhibited by ADP and alpha-ketoglutarate. Functionally, pyruvate carboxylase catalyzes a 2-step reaction, involving the ATP-dependent carboxylation of the covalently attached biotin in the first step and the transfer of the carboxyl group to pyruvate in the second. This is Pyruvate carboxylase subunit A (pycA) from Methanothermobacter thermautotrophicus (strain ATCC 29096 / DSM 1053 / JCM 10044 / NBRC 100330 / Delta H) (Methanobacterium thermoautotrophicum).